Consider the following 428-residue polypeptide: Glutamyl-tRNA reductase (428 aa).

Residues 55–58 (TCNR), S114, 119–121 (ETQ), and Q125 contribute to the substrate site. The active-site Nucleophile is C56. 194 to 199 (GAGEMI) is a binding site for NADP(+).

This sequence belongs to the glutamyl-tRNA reductase family. In terms of assembly, homodimer.

The enzyme catalyses (S)-4-amino-5-oxopentanoate + tRNA(Glu) + NADP(+) = L-glutamyl-tRNA(Glu) + NADPH + H(+). The protein operates within porphyrin-containing compound metabolism; protoporphyrin-IX biosynthesis; 5-aminolevulinate from L-glutamyl-tRNA(Glu): step 1/2. Functionally, catalyzes the NADPH-dependent reduction of glutamyl-tRNA(Glu) to glutamate 1-semialdehyde (GSA). This is Glutamyl-tRNA reductase from Paraburkholderia phytofirmans (strain DSM 17436 / LMG 22146 / PsJN) (Burkholderia phytofirmans).